The chain runs to 512 residues: 2-isopropylmalate synthase (512 aa).

The Pyruvate carboxyltransferase domain maps to 5-268 (LIIFDTTLRD…DLNIDTTHIV (264 aa)). Mn(2+)-binding residues include D14, H202, H204, and N239. Positions 394-512 (AFVSLSQHSE…SQAEKVAAQG (119 aa)) are regulatory domain.

Belongs to the alpha-IPM synthase/homocitrate synthase family. LeuA type 1 subfamily. In terms of assembly, homodimer. Mn(2+) is required as a cofactor.

The protein resides in the cytoplasm. The catalysed reaction is 3-methyl-2-oxobutanoate + acetyl-CoA + H2O = (2S)-2-isopropylmalate + CoA + H(+). The protein operates within amino-acid biosynthesis; L-leucine biosynthesis; L-leucine from 3-methyl-2-oxobutanoate: step 1/4. In terms of biological role, catalyzes the condensation of the acetyl group of acetyl-CoA with 3-methyl-2-oxobutanoate (2-ketoisovalerate) to form 3-carboxy-3-hydroxy-4-methylpentanoate (2-isopropylmalate). The chain is 2-isopropylmalate synthase from Variovorax paradoxus (strain S110).